The primary structure comprises 195 residues: Segregation and condensation protein B (195 aa).

The tract at residues 169-195 (LEDVAASQENSREAGGRGSIPGHPGEE) is disordered.

This sequence belongs to the ScpB family. Homodimer. Homodimerization may be required to stabilize the binding of ScpA to the Smc head domains. Component of a cohesin-like complex composed of ScpA, ScpB and the Smc homodimer, in which ScpA and ScpB bind to the head domain of Smc. The presence of the three proteins is required for the association of the complex with DNA.

The protein localises to the cytoplasm. Functionally, participates in chromosomal partition during cell division. May act via the formation of a condensin-like complex containing Smc and ScpA that pull DNA away from mid-cell into both cell halves. The chain is Segregation and condensation protein B from Moorella thermoacetica (strain ATCC 39073 / JCM 9320).